A 407-amino-acid polypeptide reads, in one-letter code: Aspartokinase (407 aa).

7–10 (KFGG) provides a ligand contact to ATP. 25–30 (RVIEEV) contributes to the substrate binding site. S41 is an ATP binding site. Substrate-binding positions include 47-49 (TDE), E74, 125-126 (LD), 150-153 (RGGS), and S153. ATP is bound by residues 173–174 (TD) and 179–184 (FTTDPR). ACT domains follow at residues 264 to 338 (VTVV…LAKV) and 340 to 407 (IVGS…AVRS). Substrate-binding positions include 289–291 (NVD), Q295, 351–352 (VA), 365–366 (EI), and 372–373 (SE).

The protein belongs to the aspartokinase family. In terms of assembly, tetramer consisting of 2 isoforms Alpha (catalytic and regulation) and of a homodimer of 2 isoforms Beta (regulation).

The enzyme catalyses L-aspartate + ATP = 4-phospho-L-aspartate + ADP. It functions in the pathway amino-acid biosynthesis; L-lysine biosynthesis via DAP pathway; (S)-tetrahydrodipicolinate from L-aspartate: step 1/4. Its pathway is amino-acid biosynthesis; L-methionine biosynthesis via de novo pathway; L-homoserine from L-aspartate: step 1/3. It participates in amino-acid biosynthesis; L-threonine biosynthesis; L-threonine from L-aspartate: step 1/5. Lysine-sensitive. In terms of biological role, catalyzes the phosphorylation of the beta-carboxyl group of aspartic acid with ATP to yield 4-phospho-L-aspartate, which is involved in the branched biosynthetic pathway leading to the biosynthesis of amino acids threonine, isoleucine and methionine. The sequence is that of Aspartokinase (lysC) from Geobacillus stearothermophilus (Bacillus stearothermophilus).